We begin with the raw amino-acid sequence, 211 residues long: Large ribosomal subunit protein bL25 (211 aa).

The disordered stretch occupies residues 175-211; that stretch reads VSEPVEQDLGEESETEEEGAEGEKPAESTGEEPGDDE. Residues 179–194 are compositionally biased toward acidic residues; it reads VEQDLGEESETEEEGA.

The protein belongs to the bacterial ribosomal protein bL25 family. CTC subfamily. In terms of assembly, part of the 50S ribosomal subunit; part of the 5S rRNA/L5/L18/L25 subcomplex. Contacts the 5S rRNA. Binds to the 5S rRNA independently of L5 and L18.

Its function is as follows. This is one of the proteins that binds to the 5S RNA in the ribosome where it forms part of the central protuberance. This chain is Large ribosomal subunit protein bL25, found in Kocuria rhizophila (strain ATCC 9341 / DSM 348 / NBRC 103217 / DC2201).